The primary structure comprises 355 residues: Glycerol-1-phosphate dehydrogenase [NAD(P)+] (355 aa).

NAD(+) contacts are provided by residues 101–105 (GKSID) and 123–126 (TAAS). Asp128 serves as a coordination point for substrate. NAD(+) is bound at residue Ser132. Residue Asp175 participates in substrate binding. Residues Asp175 and His255 each contribute to the Zn(2+) site. His259 contacts substrate. Residue His271 coordinates Zn(2+).

This sequence belongs to the glycerol-1-phosphate dehydrogenase family. In terms of assembly, homodimer. Zn(2+) serves as cofactor.

It is found in the cytoplasm. It catalyses the reaction sn-glycerol 1-phosphate + NAD(+) = dihydroxyacetone phosphate + NADH + H(+). It carries out the reaction sn-glycerol 1-phosphate + NADP(+) = dihydroxyacetone phosphate + NADPH + H(+). It participates in membrane lipid metabolism; glycerophospholipid metabolism. Catalyzes the NAD(P)H-dependent reduction of dihydroxyacetonephosphate (DHAP or glycerone phosphate) to glycerol 1-phosphate (G1P). The G1P thus generated is used as the glycerophosphate backbone of phospholipids in the cellular membranes of Archaea. The protein is Glycerol-1-phosphate dehydrogenase [NAD(P)+] of Staphylothermus marinus (strain ATCC 43588 / DSM 3639 / JCM 9404 / F1).